The following is a 150-amino-acid chain: Large ribosomal subunit protein uL13 (150 aa).

The protein belongs to the universal ribosomal protein uL13 family. As to quaternary structure, part of the 50S ribosomal subunit.

This protein is one of the early assembly proteins of the 50S ribosomal subunit, although it is not seen to bind rRNA by itself. It is important during the early stages of 50S assembly. The polypeptide is Large ribosomal subunit protein uL13 (Chlorobium phaeobacteroides (strain BS1)).